The following is a 111-amino-acid chain: Distal membrane-arm assembly complex protein 1 (111 aa).

Residues 1-11 (MGSSFSGSTEF) show a composition bias toward polar residues. The interval 1–40 (MGSSFSGSTEFSAPAPPTVSTAVPANPPAKSAVPASPARD) is disordered. Low complexity predominate over residues 18–38 (TVSTAVPANPPAKSAVPASPA). 2 helical membrane-spanning segments follow: residues 51–68 (VLSGSTLFGAGTYVYLVA) and 81–101 (GTVLQMVIGISIACWGVVVLV).

Interacts with incompletely assembled mitochondrial NADH:ubiquinone oxidoreductase complex (complex I).

It localises to the mitochondrion inner membrane. Its function is as follows. Required for the assembly of the mitochondrial NADH:ubiquinone oxidoreductase complex (complex I). Involved in the assembly of the distal region of complex I. The chain is Distal membrane-arm assembly complex protein 1 from Mus musculus (Mouse).